We begin with the raw amino-acid sequence, 206 residues long: Uridine kinase (206 aa).

Residue 9–16 (GGSGSGKT) coordinates ATP.

The protein belongs to the uridine kinase family.

Its subcellular location is the cytoplasm. It catalyses the reaction uridine + ATP = UMP + ADP + H(+). The enzyme catalyses cytidine + ATP = CMP + ADP + H(+). The protein operates within pyrimidine metabolism; CTP biosynthesis via salvage pathway; CTP from cytidine: step 1/3. It participates in pyrimidine metabolism; UMP biosynthesis via salvage pathway; UMP from uridine: step 1/1. This Borrelia duttonii (strain Ly) protein is Uridine kinase.